A 511-amino-acid polypeptide reads, in one-letter code: Histidine ammonia-lyase (511 aa).

Positions 144–146 (ASG) form a cross-link, 5-imidazolinone (Ala-Gly). A 2,3-didehydroalanine (Ser) modification is found at Ser-145.

This sequence belongs to the PAL/histidase family. Contains an active site 4-methylidene-imidazol-5-one (MIO), which is formed autocatalytically by cyclization and dehydration of residues Ala-Ser-Gly.

Its subcellular location is the cytoplasm. It carries out the reaction L-histidine = trans-urocanate + NH4(+). It participates in amino-acid degradation; L-histidine degradation into L-glutamate; N-formimidoyl-L-glutamate from L-histidine: step 1/3. The polypeptide is Histidine ammonia-lyase (Halalkalibacterium halodurans (strain ATCC BAA-125 / DSM 18197 / FERM 7344 / JCM 9153 / C-125) (Bacillus halodurans)).